The sequence spans 235 residues: Probable transcriptional regulatory protein Ccur92_05350 (235 aa).

The protein belongs to the TACO1 family.

The protein resides in the cytoplasm. The protein is Probable transcriptional regulatory protein Ccur92_05350 of Campylobacter curvus (strain 525.92).